Consider the following 144-residue polypeptide: Peptide methionine sulfoxide reductase MsrB (144 aa).

The MsrB domain maps to 5-127; the sequence is KEEKIKSLNR…NSAALRFIPK (123 aa). The active-site Nucleophile is the cysteine 116.

The protein belongs to the MsrB Met sulfoxide reductase family.

The catalysed reaction is L-methionyl-[protein] + [thioredoxin]-disulfide + H2O = L-methionyl-(R)-S-oxide-[protein] + [thioredoxin]-dithiol. The protein is Peptide methionine sulfoxide reductase MsrB of Bacillus velezensis (strain DSM 23117 / BGSC 10A6 / LMG 26770 / FZB42) (Bacillus amyloliquefaciens subsp. plantarum).